Consider the following 430-residue polypeptide: Sesquiterpene synthase 15 (430 aa).

Mg(2+) is bound by residues aspartate 182, aspartate 186, and glutamate 335. Residues 182–186 (DDIYD) carry the DDXXD motif motif.

It belongs to the terpene synthase family. Tpsa subfamily. Mg(2+) is required as a cofactor. It depends on Mn(2+) as a cofactor.

The protein operates within secondary metabolite biosynthesis; terpenoid biosynthesis. In terms of biological role, sesquiterpene synthase involved in the biosynthesis of volatile compounds. No activity detected with geranyl diphosphate (GPP) and farnesyl diphosphate (FPP) as substrates. The protein is Sesquiterpene synthase 15 of Solanum lycopersicum (Tomato).